The primary structure comprises 324 residues: Biotin synthase (324 aa).

The Radical SAM core domain maps to 43 to 273; the sequence is FCGNYFNFCS…HVFLRLAGGR (231 aa). The [4Fe-4S] cluster site is built by cysteine 61, cysteine 65, and cysteine 68. 4 residues coordinate [2Fe-2S] cluster: serine 105, cysteine 138, cysteine 198, and arginine 268.

This sequence belongs to the radical SAM superfamily. Biotin synthase family. As to quaternary structure, homodimer. The cofactor is [4Fe-4S] cluster. Requires [2Fe-2S] cluster as cofactor.

The catalysed reaction is (4R,5S)-dethiobiotin + (sulfur carrier)-SH + 2 reduced [2Fe-2S]-[ferredoxin] + 2 S-adenosyl-L-methionine = (sulfur carrier)-H + biotin + 2 5'-deoxyadenosine + 2 L-methionine + 2 oxidized [2Fe-2S]-[ferredoxin]. It participates in cofactor biosynthesis; biotin biosynthesis; biotin from 7,8-diaminononanoate: step 2/2. Its function is as follows. Catalyzes the conversion of dethiobiotin (DTB) to biotin by the insertion of a sulfur atom into dethiobiotin via a radical-based mechanism. The sequence is that of Biotin synthase from Campylobacter hominis (strain ATCC BAA-381 / DSM 21671 / CCUG 45161 / LMG 19568 / NCTC 13146 / CH001A).